The primary structure comprises 116 residues: MKTIIVFLSLLVLATKFGDANEGVNQEQMKEVIQNEFREDFLNEMAPMSLLQQLEAIESTLLEKEADRNSRQKRCNGKNVPCGSNHSPCCSGLSCEETFGYGWLYKSPYCVIPSNG.

The N-terminal stretch at 1 to 20 (MKTIIVFLSLLVLATKFGDA) is a signal peptide. Positions 21–76 (NEGVNQEQMKEVIQNEFREDFLNEMAPMSLLQQLEAIESTLLEKEADRNSRQKRCN) are excised as a propeptide. Intrachain disulfides connect C75/C90, C82/C95, and C89/C110.

The protein belongs to the neurotoxin 14 (magi-1) family. 06 (ICK-Trit) subfamily. As to expression, expressed by the venom gland.

The protein resides in the secreted. In terms of biological role, ion channel inhibitor. The protein is U16-barytoxin-Tl1c of Trittame loki (Brush-footed trapdoor spider).